The chain runs to 181 residues: Protein Syd (181 aa).

Belongs to the Syd family.

The protein resides in the cell inner membrane. Its function is as follows. Interacts with the SecY protein in vivo. May bind preferentially to an uncomplexed state of SecY, thus functioning either as a chelating agent for excess SecY in the cell or as a regulatory factor that negatively controls the translocase function. This chain is Protein Syd, found in Shigella flexneri serotype 5b (strain 8401).